A 180-amino-acid polypeptide reads, in one-letter code: MRILGIDPGLRVTGFGIIDVSGHRLAYVASGVIRTPTADLATRLGTIFQGVSTIVREHAPDQSAIEKVFVNVNPQSTLLLGQARGAAICGLVAGGLPVAEYTALQLKQAVVGYGRATKTQMQEMVTRLLNLSGQPGSDAADALGMAICHAHGGNTLSTLGGLAPALAKKGLRVRRGRLVG.

Residues Asp-7, Glu-66, and Asp-138 contribute to the active site. Residues Asp-7, Glu-66, and Asp-138 each contribute to the Mg(2+) site.

Belongs to the RuvC family. In terms of assembly, homodimer which binds Holliday junction (HJ) DNA. The HJ becomes 2-fold symmetrical on binding to RuvC with unstacked arms; it has a different conformation from HJ DNA in complex with RuvA. In the full resolvosome a probable DNA-RuvA(4)-RuvB(12)-RuvC(2) complex forms which resolves the HJ. The cofactor is Mg(2+).

The protein localises to the cytoplasm. It catalyses the reaction Endonucleolytic cleavage at a junction such as a reciprocal single-stranded crossover between two homologous DNA duplexes (Holliday junction).. Its function is as follows. The RuvA-RuvB-RuvC complex processes Holliday junction (HJ) DNA during genetic recombination and DNA repair. Endonuclease that resolves HJ intermediates. Cleaves cruciform DNA by making single-stranded nicks across the HJ at symmetrical positions within the homologous arms, yielding a 5'-phosphate and a 3'-hydroxyl group; requires a central core of homology in the junction. The consensus cleavage sequence is 5'-(A/T)TT(C/G)-3'. Cleavage occurs on the 3'-side of the TT dinucleotide at the point of strand exchange. HJ branch migration catalyzed by RuvA-RuvB allows RuvC to scan DNA until it finds its consensus sequence, where it cleaves and resolves the cruciform DNA. The sequence is that of Crossover junction endodeoxyribonuclease RuvC from Burkholderia lata (strain ATCC 17760 / DSM 23089 / LMG 22485 / NCIMB 9086 / R18194 / 383).